The primary structure comprises 118 residues: uncharacterized protein (118 aa).

C11 and C14 are joined by a disulfide.

Belongs to the ArsC family.

This is an uncharacterized protein from Bacillus subtilis (strain 168).